An 844-amino-acid polypeptide reads, in one-letter code: Bifunctional abietadiene synthase, chloroplastic (844 aa).

The transit peptide at 1–46 directs the protein to the chloroplast; that stretch reads QSIPHFSTTLNAGSSARKRRSLYLRWGKGSNKIIACVGEGATSVPY. K245 is a substrate binding site. The Mg(2+) site is built by D378 and D380. The short motif at 378-381 is the DXDD motif element; the sequence is DIDD. K465 provides a ligand contact to substrate. The Mg(2+) site is built by D597, D601, N741, T745, and E749. The short motif at 597–601 is the DDXXD motif element; the sequence is DDLYD.

This sequence belongs to the terpene synthase family. Tpsd subfamily. In terms of assembly, monomer. The cofactor is Mg(2+).

The protein localises to the plastid. It localises to the chloroplast. The catalysed reaction is (2E,6E,10E)-geranylgeranyl diphosphate = (+)-copalyl diphosphate. It carries out the reaction (+)-copalyl diphosphate = abieta-7,13-diene + diphosphate. It catalyses the reaction (+)-copalyl diphosphate = neoabietadiene + diphosphate. The enzyme catalyses (+)-copalyl diphosphate = abieta-8(14),12-diene + diphosphate. Its pathway is terpene metabolism; oleoresin biosynthesis. Involved in defensive oleoresin formation in conifers in response to insect attack or other injury. Involved in diterpene (C20) olefins biosynthesis. Bifunctional enzyme that catalyzes two sequential cyclizations of geranylgeranyl diphosphate (GGPP) to abietadiene. The copalyl diphosphate (CPP) intermediate diffuses freely between the 2 active sites in the enzyme. This chain is Bifunctional abietadiene synthase, chloroplastic (LAS), found in Abies balsamea (Balsam fir).